Reading from the N-terminus, the 210-residue chain is Small ribosomal subunit protein uS7 (210 aa).

Belongs to the universal ribosomal protein uS7 family. As to quaternary structure, component of the small ribosomal subunit. Part of the small subunit (SSU) processome, composed of more than 70 proteins and the RNA chaperone small nucleolar RNA (snoRNA) U3.

Its subcellular location is the cytoplasm. It localises to the nucleus. It is found in the nucleolus. Functionally, component of the small ribosomal subunit. The ribosome is a large ribonucleoprotein complex responsible for the synthesis of proteins in the cell. Part of the small subunit (SSU) processome, first precursor of the small eukaryotic ribosomal subunit. During the assembly of the SSU processome in the nucleolus, many ribosome biogenesis factors, an RNA chaperone and ribosomal proteins associate with the nascent pre-rRNA and work in concert to generate RNA folding, modifications, rearrangements and cleavage as well as targeted degradation of pre-ribosomal RNA by the RNA exosome. The polypeptide is Small ribosomal subunit protein uS7 (rps-5) (Caenorhabditis elegans).